A 470-amino-acid chain; its full sequence is Serine hydroxymethyltransferase 5 (470 aa).

K244 is subject to N6-(pyridoxal phosphate)lysine.

Belongs to the SHMT family. In terms of assembly, homotetramer. It depends on pyridoxal 5'-phosphate as a cofactor.

Its subcellular location is the cytoplasm. The catalysed reaction is (6R)-5,10-methylene-5,6,7,8-tetrahydrofolate + glycine + H2O = (6S)-5,6,7,8-tetrahydrofolate + L-serine. It functions in the pathway one-carbon metabolism; tetrahydrofolate interconversion. Catalyzes the interconversion of serine and glycine. This Arabidopsis thaliana (Mouse-ear cress) protein is Serine hydroxymethyltransferase 5 (SHM5).